A 580-amino-acid polypeptide reads, in one-letter code: F-box only protein 24 (580 aa).

Residues Pro-36–Ile-82 form the F-box domain. The stretch at Gly-376–Ser-425 is one RCC1 repeat.

In terms of assembly, directly interacts with SKP1 and CUL1.

Its function is as follows. Substrate-recognition component of the SCF (SKP1-CUL1-F-box protein)-type E3 ubiquitin ligase complex. The sequence is that of F-box only protein 24 (FBXO24) from Homo sapiens (Human).